We begin with the raw amino-acid sequence, 191 residues long: Putative manganese efflux pump MntP (191 aa).

Helical transmembrane passes span 3-23 (PISILLIGFAMSTDAFAAAIG), 37-57 (LRAGIIFGVIEAITPIIGWLL), 65-85 (VEAFDHWIAFGLLGALGIHMI), 107-129 (WKLALTGFATSIDAMAVGIGLAF), 144-164 (CTLTMVTVGIMLGRVLGSMVG), and 169-189 (IIGGVILVIIGATILYEHLHG).

The protein belongs to the MntP (TC 9.B.29) family.

The protein localises to the cell inner membrane. Functionally, probably functions as a manganese efflux pump. This chain is Putative manganese efflux pump MntP, found in Stenotrophomonas maltophilia (strain R551-3).